Consider the following 523-residue polypeptide: Sensory neuron membrane protein 1 (523 aa).

The Cytoplasmic portion of the chain corresponds to 1-11 (MQLPRELKYAA). The helical transmembrane segment at 12-32 (IAGGVALFGLIFGWVLFPTIL) threads the bilayer. The Extracellular segment spans residues 33 to 458 (KSQLKKEMAL…HQLFIPKRVV (426 aa)). N-linked (GlcNAc...) asparagine glycosylation is found at Asn-67 and Asn-229. 3 disulfides stabilise this stretch: Cys-268-Cys-333, Cys-297-Cys-352, and Cys-335-Cys-341. N-linked (GlcNAc...) asparagine glycosylation occurs at Asn-440. Residues 459–479 (GVLRWWMVSFGSLGAVIGIVF) form a helical membrane-spanning segment. At 480 to 523 (HFRDHIMRLAVSGDTKVSKVTPEEEEQKDISVIGQAQEPAKVNI) the chain is on the cytoplasmic side.

It belongs to the CD36 family.

The protein localises to the cell membrane. Functionally, plays an olfactory role that is not restricted to pheromone sensitivity. The sequence is that of Sensory neuron membrane protein 1 from Helicoverpa armigera (Cotton bollworm).